We begin with the raw amino-acid sequence, 408 residues long: Peptidase T (408 aa).

H78 is a binding site for Zn(2+). D80 is a catalytic residue. Residue D141 participates in Zn(2+) binding. Residue E175 is the Proton acceptor of the active site. Zn(2+) contacts are provided by E176, D198, and H380.

The protein belongs to the peptidase M20B family. Zn(2+) is required as a cofactor.

The protein resides in the cytoplasm. It catalyses the reaction Release of the N-terminal residue from a tripeptide.. In terms of biological role, cleaves the N-terminal amino acid of tripeptides. This chain is Peptidase T, found in Halothermothrix orenii (strain H 168 / OCM 544 / DSM 9562).